A 216-amino-acid chain; its full sequence is Peptide methionine sulfoxide reductase MsrA (216 aa).

Residue cysteine 54 is part of the active site.

This sequence belongs to the MsrA Met sulfoxide reductase family.

It catalyses the reaction L-methionyl-[protein] + [thioredoxin]-disulfide + H2O = L-methionyl-(S)-S-oxide-[protein] + [thioredoxin]-dithiol. It carries out the reaction [thioredoxin]-disulfide + L-methionine + H2O = L-methionine (S)-S-oxide + [thioredoxin]-dithiol. Functionally, has an important function as a repair enzyme for proteins that have been inactivated by oxidation. Catalyzes the reversible oxidation-reduction of methionine sulfoxide in proteins to methionine. In Xylella fastidiosa (strain Temecula1 / ATCC 700964), this protein is Peptide methionine sulfoxide reductase MsrA.